The following is a 444-amino-acid chain: Multidrug resistance protein MdtA (444 aa).

Residues 1–20 (MKSQSKRTSRLFVFVGGVVA) form the signal peptide. The segment covering 37-52 (NNTSGAQQSARGQDTS) has biased composition (polar residues). Disordered regions lie at residues 37 to 60 (NNTS…RNTP) and 398 to 444 (TPRS…AEKS). A compositionally biased stretch (low complexity) spans 406 to 419 (ANPASAEKAAAEAE). Polar residues predominate over residues 435 to 444 (ARSTTAAEKS).

It belongs to the membrane fusion protein (MFP) (TC 8.A.1) family. As to quaternary structure, part of a tripartite efflux system composed of MdtA, MdtB and MdtC.

The protein localises to the cell inner membrane. The polypeptide is Multidrug resistance protein MdtA (Yersinia pseudotuberculosis serotype O:1b (strain IP 31758)).